The chain runs to 66 residues: U10-theraphotoxin-Cg1a 3 (66 aa).

Residues 1-21 (MKTSVLFVIFGLALLFCLSFA) form the signal peptide. Positions 22–29 (DELEDTGR) are excised as a propeptide. Cystine bridges form between cysteine 31/cysteine 46, cysteine 38/cysteine 51, and cysteine 45/cysteine 58.

It belongs to the neurotoxin 10 (Hwtx-1) family. 29 (Jztx-13) subfamily. As to expression, expressed by the venom gland.

It localises to the secreted. Functionally, probable ion channel inhibitor. This Chilobrachys guangxiensis (Chinese earth tiger tarantula) protein is U10-theraphotoxin-Cg1a 3.